Here is a 983-residue protein sequence, read N- to C-terminus: Ephrin type-A receptor 3 (983 aa).

Positions 1–20 (MDCQLSILLLLSCSVLDSFG) are cleaved as a signal peptide. Topologically, residues 21 to 541 (ELIPQPSNEV…SFSISGESSQ (521 aa)) are extracellular. An Eph LBD domain is found at 29-207 (EVNLLDSKTI…YFKKCPFTVK (179 aa)). 5 N-linked (GlcNAc...) asparagine glycosylation sites follow: N232, N337, N391, N404, and N493. Fibronectin type-III domains follow at residues 325–435 (PPSS…TNQA) and 436–531 (APSP…TSPD). A helical membrane pass occupies residues 542 to 565 (VVMIAISAAVAIILLTVVIYVLIG). Topologically, residues 566–983 (RFCGYKSKHG…TQSKNGPVPV (418 aa)) are cytoplasmic. Y596 and Y602 each carry phosphotyrosine; by autocatalysis. The Protein kinase domain occupies 621–882 (ISIDKVVGAG…QIVSILDKLI (262 aa)). ATP is bound by residues 628–633 (GAGEFG), K653, and 700–706 (EYMENGS). A Phosphotyrosine; by autocatalysis modification is found at Y701. D746 (proton acceptor) is an active-site residue. 750-751 (RN) serves as a coordination point for ATP. Residue Y779 is modified to Phosphotyrosine; by autocatalysis. An SAM domain is found at 911-975 (TTFRTTGDWL…ISSIKALETQ (65 aa)). At Y937 the chain carries Phosphotyrosine. The PDZ-binding motif lies at 981–983 (VPV).

This sequence belongs to the protein kinase superfamily. Tyr protein kinase family. Ephrin receptor subfamily. As to quaternary structure, heterotetramer upon binding of the ligand. The heterotetramer is composed of an ephrin dimer and a receptor dimer. Oligomerization is probably required to induce biological responses. Forms a ternary EFNA5-EPHA3-ADAM10 complex mediating EFNA5 extracellular domain shedding by ADAM10 which regulates the EFNA5-EPHA3 complex internalization and function. Interacts with NCK1 (via SH2 domain); mediates EFNA5-EPHA3 signaling. Interacts (phosphorylated) with PTPN1; dephosphorylates EPHA3 and may regulate its trafficking and function. Interacts (phosphorylated) with CRK; mediates EFNA5-EPHA3 signaling through RHOA GTPase activation. Post-translationally, autophosphorylates upon activation by EFNA5. Phosphorylation on Tyr-602 mediates interaction with NCK1. Dephosphorylated by PTPN1. In terms of tissue distribution, widely expressed. Highest level in placenta.

It localises to the cell membrane. It is found in the secreted. The enzyme catalyses L-tyrosyl-[protein] + ATP = O-phospho-L-tyrosyl-[protein] + ADP + H(+). In terms of biological role, receptor tyrosine kinase which binds promiscuously membrane-bound ephrin family ligands residing on adjacent cells, leading to contact-dependent bidirectional signaling into neighboring cells. The signaling pathway downstream of the receptor is referred to as forward signaling while the signaling pathway downstream of the ephrin ligand is referred to as reverse signaling. Highly promiscuous for ephrin-A ligands it binds preferentially EFNA5. Upon activation by EFNA5 regulates cell-cell adhesion, cytoskeletal organization and cell migration. Plays a role in cardiac cells migration and differentiation and regulates the formation of the atrioventricular canal and septum during development probably through activation by EFNA1. Involved in the retinotectal mapping of neurons. May also control the segregation but not the guidance of motor and sensory axons during neuromuscular circuit development. In Homo sapiens (Human), this protein is Ephrin type-A receptor 3 (EPHA3).